Consider the following 214-residue polypeptide: Thymidylate kinase (214 aa).

Residue 10 to 17 participates in ATP binding; the sequence is GGEGAGKS.

It belongs to the thymidylate kinase family.

It catalyses the reaction dTMP + ATP = dTDP + ADP. Its function is as follows. Phosphorylation of dTMP to form dTDP in both de novo and salvage pathways of dTTP synthesis. The polypeptide is Thymidylate kinase (Brucella abortus (strain S19)).